Here is a 400-residue protein sequence, read N- to C-terminus: Dehydrogenase efuE (400 aa).

NAD(+) is bound by residues 222-223, 303-305, and aspartate 329; these read AI and TAR. Residue arginine 305 is part of the active site. Residue glutamate 334 is part of the active site. Histidine 352 functions as the Proton donor in the catalytic mechanism. 352–355 contacts NAD(+); it reads HLGG.

It belongs to the D-isomer specific 2-hydroxyacid dehydrogenase family.

It functions in the pathway secondary metabolite biosynthesis; terpenoid biosynthesis. In terms of biological role, dehydrogenase; part of the gene cluster that mediates the biosynthesis of enfumafungin, a glycosylated fernene-type triterpenoid with potent antifungal activity, mediated by its interaction with beta-1,3-glucan synthase and the fungal cell wall. The pathway begins with the terpene cyclase-glycosyl transferase fusion protein that most likely uses 2,3-oxidosqualene as substrate and catalyzes glycosylation immediately after cyclization. The fernene glycoside then could be processed by the desaturase efuI which catalyzes isomerization of a double bond established by efuA to form the core structure. The latter would then undergo a series of hydroxylations in unknown order at C-2, C-19, C-23 and C-25, which would be catalyzed by two of the three cytochrome P450 monooxygenases efuB, efuG or efuH. The hydroxy-group at C-25 becomes oxidized by the dehydrogenase efuE to enable a spontaneous, non-enzymatic hemiacetal formation with C-23. After hydroxylation at C-2, acetylation by the acetyltransferase efuC takes place. The final steps in enfumafungin biosynthesis require expansion of the 5-membered ring by lactonization via a Baeyer-Villiger reaction mediated by one of the BGC's cytochrome P450 monooxygenases (efuB, efuG or efuH) followed by ring cleavage. This type of reaction would establish a double bond between C-20 and C-21 which could be reduced by the reductase efuL to form the final product. In Hormonema carpetanum, this protein is Dehydrogenase efuE.